The following is a 90-amino-acid chain: Small ribosomal subunit protein uS15c (90 aa).

Belongs to the universal ribosomal protein uS15 family. As to quaternary structure, part of the 30S ribosomal subunit.

Its subcellular location is the plastid. The protein localises to the chloroplast. The chain is Small ribosomal subunit protein uS15c (rps15) from Piper cenocladum (Ant piper).